A 183-amino-acid polypeptide reads, in one-letter code: MITMKDIIRDGHPTLREKAKELSFPLSNNDKETLRAMREFLINSQDEETAKRYGLRSGVGLAAPQINEPKRMIAVYLPDDGNGKSYDYMLVNPKIMSYSVQEAYLPTGEGCLSVDENIPGLVHRHHRVTIKAQDIDGNDVKLRLKGYPAIVFQHEIDHLNGIMFYDYIDANEPLKPHEEAVEV.

Cys-111 and His-154 together coordinate Fe cation. Glu-155 is an active-site residue. His-158 contributes to the Fe cation binding site.

This sequence belongs to the polypeptide deformylase family. Requires Fe(2+) as cofactor.

It catalyses the reaction N-terminal N-formyl-L-methionyl-[peptide] + H2O = N-terminal L-methionyl-[peptide] + formate. Removes the formyl group from the N-terminal Met of newly synthesized proteins. Requires at least a dipeptide for an efficient rate of reaction. N-terminal L-methionine is a prerequisite for activity but the enzyme has broad specificity at other positions. This Staphylococcus epidermidis (strain ATCC 35984 / DSM 28319 / BCRC 17069 / CCUG 31568 / BM 3577 / RP62A) protein is Peptide deformylase.